The sequence spans 306 residues: Phospho-N-acetylmuramoyl-pentapeptide-transferase (306 aa).

Helical transmembrane passes span Ile-2 to Trp-22, Ser-47 to Phe-67, Phe-71 to Leu-91, Ile-105 to Ile-125, Leu-131 to Pro-151, Gly-162 to Phe-182, Ile-185 to His-205, Ile-209 to Val-229, Leu-236 to Phe-256, and Ile-284 to Tyr-304.

The protein belongs to the glycosyltransferase 4 family. MraY subfamily. Mg(2+) serves as cofactor.

It is found in the cell inner membrane. It catalyses the reaction UDP-N-acetyl-alpha-D-muramoyl-L-alanyl-gamma-D-glutamyl-meso-2,6-diaminopimeloyl-D-alanyl-D-alanine + di-trans,octa-cis-undecaprenyl phosphate = di-trans,octa-cis-undecaprenyl diphospho-N-acetyl-alpha-D-muramoyl-L-alanyl-D-glutamyl-meso-2,6-diaminopimeloyl-D-alanyl-D-alanine + UMP. The protein operates within cell wall biogenesis; peptidoglycan biosynthesis. Functionally, catalyzes the initial step of the lipid cycle reactions in the biosynthesis of the cell wall peptidoglycan: transfers peptidoglycan precursor phospho-MurNAc-pentapeptide from UDP-MurNAc-pentapeptide onto the lipid carrier undecaprenyl phosphate, yielding undecaprenyl-pyrophosphoryl-MurNAc-pentapeptide, known as lipid I. The sequence is that of Phospho-N-acetylmuramoyl-pentapeptide-transferase from Dictyoglomus thermophilum (strain ATCC 35947 / DSM 3960 / H-6-12).